The chain runs to 190 residues: dCTP deaminase (190 aa).

Residue 107–112 (KSTYAR) participates in dCTP binding. Residue Glu-133 is the Proton donor/acceptor of the active site. Gln-152, Tyr-166, and Gln-176 together coordinate dCTP.

This sequence belongs to the dCTP deaminase family. In terms of assembly, homotrimer.

The enzyme catalyses dCTP + H2O + H(+) = dUTP + NH4(+). It functions in the pathway pyrimidine metabolism; dUMP biosynthesis; dUMP from dCTP (dUTP route): step 1/2. In terms of biological role, catalyzes the deamination of dCTP to dUTP. The polypeptide is dCTP deaminase (Campylobacter hominis (strain ATCC BAA-381 / DSM 21671 / CCUG 45161 / LMG 19568 / NCTC 13146 / CH001A)).